Reading from the N-terminus, the 143-residue chain is Large ribosomal subunit protein uL13 (143 aa).

The protein belongs to the universal ribosomal protein uL13 family. Part of the 50S ribosomal subunit.

Functionally, this protein is one of the early assembly proteins of the 50S ribosomal subunit, although it is not seen to bind rRNA by itself. It is important during the early stages of 50S assembly. In Methylacidiphilum infernorum (isolate V4) (Methylokorus infernorum (strain V4)), this protein is Large ribosomal subunit protein uL13.